Here is a 691-residue protein sequence, read N- to C-terminus: Elongation factor G (691 aa).

In terms of domain architecture, tr-type G spans 8-282; that stretch reads EKTRNIGIMA…AVVDYLPSPV (275 aa). GTP-binding positions include 17–24, 81–85, and 135–138; these read AHIDAGKT, DTPGH, and NKMD.

It belongs to the TRAFAC class translation factor GTPase superfamily. Classic translation factor GTPase family. EF-G/EF-2 subfamily.

The protein localises to the cytoplasm. Functionally, catalyzes the GTP-dependent ribosomal translocation step during translation elongation. During this step, the ribosome changes from the pre-translocational (PRE) to the post-translocational (POST) state as the newly formed A-site-bound peptidyl-tRNA and P-site-bound deacylated tRNA move to the P and E sites, respectively. Catalyzes the coordinated movement of the two tRNA molecules, the mRNA and conformational changes in the ribosome. This chain is Elongation factor G, found in Caldicellulosiruptor bescii (strain ATCC BAA-1888 / DSM 6725 / KCTC 15123 / Z-1320) (Anaerocellum thermophilum).